Here is a 380-residue protein sequence, read N- to C-terminus: Cytochrome b (380 aa).

Helical transmembrane passes span 34-54, 78-99, 114-134, and 179-199; these read FGSLLGICLTTQILTGLLLAM, WLIRNLHANGASFFFICIYLHI, WNTGVILLLTLMATAFVGYVL, and FFALHFLLPFMIAGLTTIHLT. Residues His-84 and His-98 each coordinate heme b. Heme b-binding residues include His-183 and His-197. Residue His-202 participates in a ubiquinone binding. The next 4 membrane-spanning stretches (helical) occupy residues 227 to 247, 289 to 309, 321 to 341, and 348 to 368; these read LKDILGFTLMLLPLTTLALFS, LGGVLALAASVLILFLIPFLH, ISQLLFWILVTNLLILTWVGS, and FIIIGQLASITYFTILLVLFP.

It belongs to the cytochrome b family. The cytochrome bc1 complex contains 11 subunits: 3 respiratory subunits (MT-CYB, CYC1 and UQCRFS1), 2 core proteins (UQCRC1 and UQCRC2) and 6 low-molecular weight proteins (UQCRH/QCR6, UQCRB/QCR7, UQCRQ/QCR8, UQCR10/QCR9, UQCR11/QCR10 and a cleavage product of UQCRFS1). This cytochrome bc1 complex then forms a dimer. The cofactor is heme b.

Its subcellular location is the mitochondrion inner membrane. Functionally, component of the ubiquinol-cytochrome c reductase complex (complex III or cytochrome b-c1 complex) that is part of the mitochondrial respiratory chain. The b-c1 complex mediates electron transfer from ubiquinol to cytochrome c. Contributes to the generation of a proton gradient across the mitochondrial membrane that is then used for ATP synthesis. This Pelecanoides georgicus (South Georgia diving petrel) protein is Cytochrome b (MT-CYB).